The primary structure comprises 488 residues: N-acyl-D-glutamate deacylase (488 aa).

The protein belongs to the metallo-dependent hydrolases superfamily. N-acyl-D-amino-acid deacylase family. The cofactor is Zn(2+).

The protein resides in the cytoplasm. It catalyses the reaction an N-acyl-D-glutamate + H2O = D-glutamate + a carboxylate. Its activity is regulated as follows. Inhibited by cobalt, copper and EDTA. In Alcaligenes xylosoxydans xylosoxydans (Achromobacter xylosoxidans), this protein is N-acyl-D-glutamate deacylase.